The primary structure comprises 608 residues: Zinc metalloproteinase-disintegrin-like agkihagin (608 aa).

The signal sequence occupies residues 1-20; sequence MIQVLLVTICLAAFPYQGSS. The propeptide occupies 21–189; that stretch reads IILESGNVND…KKASQSNLTP (169 aa). In terms of domain architecture, Peptidase M12B spans 199-395; the sequence is KFVKLFLVAD…NMPQCILKKP (197 aa). 3 disulfides stabilise this stretch: C310/C390, C350/C374, and C352/C357. H335 lines the Zn(2+) pocket. E336 is an active-site residue. The Zn(2+) site is built by H339 and H345. Positions 403–488 constitute a Disintegrin domain; the sequence is PPVCGNYFVE…ADCTDRFQKN (86 aa). Ca(2+) is bound by residues V405, N408, F410, E412, E415, and D418. Intrachain disulfides connect C406–C435, C417–C430, C419–C425, C429–C452, C443–C449, C448–C474, C461–C481, C468–C499, C492–C504, C511–C561, C526–C570, C539–C549, C556–C596, and C590–C601. The D/ECD-tripeptide motif lies at 467-469; that stretch reads ECD. 5 residues coordinate Ca(2+): D469, M470, D472, D483, and R484. N-linked (GlcNAc...) asparagine glycosylation is present at N501.

It belongs to the venom metalloproteinase (M12B) family. P-III subfamily. P-IIIc sub-subfamily. As to quaternary structure, homodimer; disulfide-linked. Zn(2+) serves as cofactor. In terms of tissue distribution, expressed by the venom gland.

Its subcellular location is the secreted. With respect to regulation, inhibited by EDTA and EGTA. Not inhibited by PMSF, antipain, pepstatin, and iodoacetamide. Its function is as follows. Strongly inhibits the collagen-induced human platelet aggregation. Hydrolyzes the Aalpha-chain of fibrinogen (FGA), without cleavage of Bbeta- and gamma-chains. Induces apoptosis and strongly inhibits proliferation of endothelial cells as well as adhesion of the cells to extracellular matrix proteins. This Deinagkistrodon acutus (Hundred-pace snake) protein is Zinc metalloproteinase-disintegrin-like agkihagin.